A 382-amino-acid chain; its full sequence is Glutamate 5-kinase (382 aa).

Lys-15 is a binding site for ATP. Substrate contacts are provided by Ser-62, Asp-149, and Asn-161. Thr-181 to Asp-182 lines the ATP pocket. One can recognise a PUA domain in the interval Arg-288 to Ser-366.

This sequence belongs to the glutamate 5-kinase family.

It localises to the cytoplasm. The catalysed reaction is L-glutamate + ATP = L-glutamyl 5-phosphate + ADP. It participates in amino-acid biosynthesis; L-proline biosynthesis; L-glutamate 5-semialdehyde from L-glutamate: step 1/2. Its function is as follows. Catalyzes the transfer of a phosphate group to glutamate to form L-glutamate 5-phosphate. The polypeptide is Glutamate 5-kinase (Delftia acidovorans (strain DSM 14801 / SPH-1)).